A 326-amino-acid polypeptide reads, in one-letter code: Probable cell division protein WhiA (326 aa).

The H-T-H motif DNA-binding region spans 275 to 308; that stretch reads SLEELGQLAEPPMTKDAVAGRIRRLLAMADKRAR.

This sequence belongs to the WhiA family.

Its function is as follows. Involved in cell division and chromosome segregation. The protein is Probable cell division protein WhiA of Saccharopolyspora erythraea (strain ATCC 11635 / DSM 40517 / JCM 4748 / NBRC 13426 / NCIMB 8594 / NRRL 2338).